The following is a 446-amino-acid chain: Packaging protein 1 (446 aa).

The span at 1–10 (METRGRRRAF) shows a compositional bias: basic residues. The tract at residues 1–74 (METRGRRRAF…PSQPPQPRSL (74 aa)) is disordered. Residue 170-177 (GPTGCGKS) participates in ATP binding. Residues 439–446 (RAYRKRNK) are DNA-binding.

This sequence belongs to the adenoviridae packaging protein 1 family. As to quaternary structure, homodimer. Part of a genome packaging complex composed of packaging proteins 1, 2 and 3; this complex specifically binds to the packaging sequence on the left end of viral genomic DNA and performs packaging of the viral genome. Interacts with protein 33K.

The protein resides in the virion. It is found in the host nucleus. The protein localises to the host nucleoplasm. It localises to the host nucleolus. Its function is as follows. Component of the packaging machinery which encapsidates the viral DNA into preformed capsids and transcriptional activator of the viral major late promoter (MLP). Binds, along with packaging proteins 2 and 3, to the specific packaging sequence on the left end of viral genomic DNA and displays ATPase activity thereby providing the power stroke of the packaging machinery. The activity of packaging protein IVa2 is stimulated by protein 33K which acts as a terminase. May be the protein that pumps DNA into the capsid powered by ATP hydrolysis. Specifically binds to the 5'-CG-3' nucleotides of the repeats making up the packaging sequence. Component of the DEF-A and DEF-B transcription factors that bind downstream elements of the major late promoter (MLP), and stimulate transcription from the MLP after initiation of viral DNA replication. DEF-A is a heterodimer packaging proteins 1 and 2 and DEF-B is a homodimer of packaging protein 1. The chain is Packaging protein 1 from Human adenovirus F serotype 40 (HAdV-40).